A 456-amino-acid chain; its full sequence is Anthranilate synthase component 1 (456 aa).

L-tryptophan-binding positions include serine 31 and 244–246 (SYM). 279–280 (GT) contacts chorismate. Glutamate 306 contributes to the Mg(2+) binding site. Chorismate contacts are provided by residues tyrosine 394, arginine 414, 428–430 (GAG), and glycine 430. Mg(2+) is bound at residue glutamate 443.

The protein belongs to the anthranilate synthase component I family. Heterotetramer consisting of two non-identical subunits: a beta subunit (TrpG) and a large alpha subunit (TrpE). Requires Mg(2+) as cofactor.

It catalyses the reaction chorismate + L-glutamine = anthranilate + pyruvate + L-glutamate + H(+). It functions in the pathway amino-acid biosynthesis; L-tryptophan biosynthesis; L-tryptophan from chorismate: step 1/5. With respect to regulation, feedback inhibited by tryptophan. Functionally, part of a heterotetrameric complex that catalyzes the two-step biosynthesis of anthranilate, an intermediate in the biosynthesis of L-tryptophan. In the first step, the glutamine-binding beta subunit (TrpG) of anthranilate synthase (AS) provides the glutamine amidotransferase activity which generates ammonia as a substrate that, along with chorismate, is used in the second step, catalyzed by the large alpha subunit of AS (TrpE) to produce anthranilate. In the absence of TrpG, TrpE can synthesize anthranilate directly from chorismate and high concentrations of ammonia. The protein is Anthranilate synthase component 1 (trpE) of Lactococcus lactis subsp. lactis (strain IL1403) (Streptococcus lactis).